The chain runs to 609 residues: UvrABC system protein C (609 aa).

A GIY-YIG domain is found at 16–94 (SSAGVYRMYD…IKQYMPKYNV (79 aa)). In terms of domain architecture, UVR spans 203-238 (QQVISALVDKMELAAERQAYEQAARFRDQIMALRKV).

It belongs to the UvrC family. Interacts with UvrB in an incision complex.

Its subcellular location is the cytoplasm. Functionally, the UvrABC repair system catalyzes the recognition and processing of DNA lesions. UvrC both incises the 5' and 3' sides of the lesion. The N-terminal half is responsible for the 3' incision and the C-terminal half is responsible for the 5' incision. The sequence is that of UvrABC system protein C from Shewanella baltica (strain OS195).